A 167-amino-acid polypeptide reads, in one-letter code: Photosystem I assembly protein Ycf3 (167 aa).

TPR repeat units follow at residues 35-68 (AFTYYRDGMSAQSEGEYAEALQNYYEAMRLEIDP), 72-105 (SYILYNIGLIHTSNGEHAKALEYYFQALERNPSL), and 120-153 (GEQAIQQGDPEASETWFDQAAEYWKQAILLAPSN).

Belongs to the Ycf3 family.

It localises to the plastid. Its subcellular location is the chloroplast thylakoid membrane. Essential for the assembly of the photosystem I (PSI) complex. May act as a chaperone-like factor to guide the assembly of the PSI subunits. The sequence is that of Photosystem I assembly protein Ycf3 from Marchantia polymorpha (Common liverwort).